The following is a 115-amino-acid chain: MKFVLLFGVLSLTLFSYSSAEMLDDFDQADEDELLSLIEKEEARAKECTPRFYDCSHDRHSCCRSELFKDVCTCFYPEGGDNEVCTCQQPKHLKYMEKAADKAKKFGGKIMKWFS.

An N-terminal signal peptide occupies residues 1-20 (MKFVLLFGVLSLTLFSYSSA). Positions 21 to 44 (EMLDDFDQADEDELLSLIEKEEAR) are excised as a propeptide. Cystine bridges form between Cys48–Cys63, Cys55–Cys72, Cys62–Cys87, and Cys74–Cys85.

The protein belongs to the neurotoxin 19 (CSTX) family. 01 subfamily. Expressed by the venom gland.

The protein resides in the secreted. The protein is U3-lycotoxin-Ls1e of Lycosa singoriensis (Wolf spider).